The sequence spans 395 residues: MGFFRTLFSFSIFALSLADTSKFIGLDDVDNIIPNSYIVVMKGAVTEAEFKDHQVWASRIHRRSKRDGAADGLDGLKTTFDFQGFKAYCGTFDKESIERITRSSDVDYVEADRVVKMAALNTQRNAPSWGLGRISHKKAGSFDYVYDSDAGSGITIYGVDTGIDIHHPDFGGRATWGVNTVDSENSDQNGHGTHTAGTFAGATYGVAKKARIIAVKVLNAEGTGSTSGVIQGIEWSTNHASSNGLSGKAAMNLSLGVRSSSVFNSAAEAAQRSGIFLAVAAGNDGFSPASARGVCTVAATDAQDQATSWSNYGSTVALYAPGDKILSIYPNGGTATLSGTSMASPHVCGVGAYLMALEGIGPGRVCDRIKQLALESVKNPGPDTTRRLLYNGSGA.

The signal sequence occupies residues 1 to 20 (MGFFRTLFSFSIFALSLADT). A propeptide spanning residues 21-120 (SKFIGLDDVD…ADRVVKMAAL (100 aa)) is cleaved from the precursor. The region spanning 36 to 117 (SYIVVMKGAV…YVEADRVVKM (82 aa)) is the Inhibitor I9 domain. One can recognise a Peptidase S8 domain in the interval 128 to 395 (SWGLGRISHK…RRLLYNGSGA (268 aa)). Active-site charge relay system residues include aspartate 160 and histidine 191. Asparagine 252 carries N-linked (GlcNAc...) asparagine glycosylation. Serine 341 acts as the Charge relay system in catalysis. N-linked (GlcNAc...) asparagine glycosylation occurs at asparagine 391.

Belongs to the peptidase S8 family.

Its subcellular location is the secreted. In terms of biological role, secreted subtilisin-like serine protease with keratinolytic activity that contributes to pathogenicity. This is Subtilisin-like protease 9 (SUB9) from Arthroderma otae (strain ATCC MYA-4605 / CBS 113480) (Microsporum canis).